The sequence spans 318 residues: Aspartate carbamoyltransferase catalytic subunit (318 aa).

Carbamoyl phosphate-binding residues include R58 and T59. An L-aspartate-binding site is contributed by K86. Residues R108, H141, and Q144 each contribute to the carbamoyl phosphate site. The L-aspartate site is built by R174 and R226. G270 and P271 together coordinate carbamoyl phosphate.

It belongs to the aspartate/ornithine carbamoyltransferase superfamily. ATCase family. Heterododecamer (2C3:3R2) of six catalytic PyrB chains organized as two trimers (C3), and six regulatory PyrI chains organized as three dimers (R2).

The catalysed reaction is carbamoyl phosphate + L-aspartate = N-carbamoyl-L-aspartate + phosphate + H(+). It participates in pyrimidine metabolism; UMP biosynthesis via de novo pathway; (S)-dihydroorotate from bicarbonate: step 2/3. Functionally, catalyzes the condensation of carbamoyl phosphate and aspartate to form carbamoyl aspartate and inorganic phosphate, the committed step in the de novo pyrimidine nucleotide biosynthesis pathway. This chain is Aspartate carbamoyltransferase catalytic subunit, found in Lactobacillus delbrueckii subsp. bulgaricus (strain ATCC BAA-365 / Lb-18).